Consider the following 96-residue polypeptide: Small ribosomal subunit protein bS16m (96 aa).

This sequence belongs to the bacterial ribosomal protein bS16 family. Component of the mitochondrial small ribosomal subunit (mt-SSU). Mature yeast 74S mitochondrial ribosomes consist of a small (37S) and a large (54S) subunit. The 37S small subunit contains a 15S ribosomal RNA (15S mt-rRNA) and at least 32 different proteins. The 54S large subunit contains a 21S rRNA (21S mt-rRNA) and at least 45 different proteins.

The protein localises to the mitochondrion. Its function is as follows. Component of the mitochondrial ribosome (mitoribosome), a dedicated translation machinery responsible for the synthesis of mitochondrial genome-encoded proteins, including at least some of the essential transmembrane subunits of the mitochondrial respiratory chain. The mitoribosomes are attached to the mitochondrial inner membrane and translation products are cotranslationally integrated into the membrane. The protein is Small ribosomal subunit protein bS16m (mrps16) of Schizosaccharomyces pombe (strain 972 / ATCC 24843) (Fission yeast).